The primary structure comprises 633 residues: ATP-dependent rRNA helicase SPB4 (633 aa).

The Q motif motif lies at 11–39; that stretch reads FSALTPALSEWIIDAVDAMGFVKTTPVQH. The Helicase ATP-binding domain maps to 42 to 253; the sequence is IPMFMKNSDV…RVGLRNPVRI (212 aa). 55 to 62 lines the ATP pocket; sequence AVTGSGKT. Acidic residues predominate over residues 119-131; that stretch reads EPDDEDTDMEDAD. Positions 119 to 140 are disordered; it reads EPDDEDTDMEDADTPPKPTFPP. Positions 201–204 match the DEAD box motif; the sequence is DEAD. The region spanning 292-446 is the Helicase C-terminal domain; it reads AMKKILSSLQ…EITVTDEDAK (155 aa). Positions 530–629 form a coiled coil; that stretch reads AYKDKAREKL…KQEAEDADFE (100 aa). Basic and acidic residues-rich tracts occupy residues 547-581 and 588-623; these read DKEEGTKKKQHKKEDREKSAWTEQKESKATKEVRR and REHERLAKMTDEERKEEDRVQAMIEQMRKKVAKQEA. The interval 547-633 is disordered; sequence DKEEGTKKKQ…EDADFEGFSD (87 aa). Positions 624–633 are enriched in acidic residues; the sequence is EDADFEGFSD.

It belongs to the DEAD box helicase family. DDX55/SPB4 subfamily. Component of pre-60S ribosomal complexes.

It localises to the nucleus. Its subcellular location is the nucleolus. The enzyme catalyses ATP + H2O = ADP + phosphate + H(+). Functionally, ATP-binding RNA helicase involved in the biogenesis of 60S ribosomal subunits. Binds 90S pre-ribosomal particles and dissociates from pre-60S ribosomal particles after processing of 27SB pre-rRNA. Required for the normal formation of 18S rRNA through the processing of pre-rRNAs at sites A0, A1 and A2, and the normal formation of 25S and 5.8S rRNAs through the processing of pre-rRNAs at sites C1 and C2. This Phaeosphaeria nodorum (strain SN15 / ATCC MYA-4574 / FGSC 10173) (Glume blotch fungus) protein is ATP-dependent rRNA helicase SPB4.